Reading from the N-terminus, the 1873-residue chain is Ankyrin repeat domain-containing protein 31 (1873 aa).

2 disordered regions span residues 1–27 (MEEGVQAPDWDSDETVIEGSVTESDLE) and 361–380 (EPLSNKRNSNSVTNSSDQET). Residues 361 to 379 (EPLSNKRNSNSVTNSSDQE) are compositionally biased toward polar residues. ANK repeat units lie at residues 488–517 (FGENLVYKAALHDDADLVHHCIKKGGNVNQ), 521–550 (AGWTALHEASVGGFYRTASELLKGGADVNI), and 554–583 (YQITPLHDAVMNGHYKVAELLLLNGADPLF). The segment at 707–740 (TGLRKGNLHNVKDPNTNVPKGIGRRKTQHKRTQV) is disordered. The span at 728 to 737 (IGRRKTQHKR) shows a compositional bias: basic residues. 3 ANK repeats span residues 1154 to 1183 (RGESQLHLAVRRGNLPLVKALIESGADVNL), 1187 to 1216 (AGWTPLHEASNEGSIDIIVELLKAGAKVNC), and 1220 to 1249 (DGILPLHDAVANNHLKAAEILLQNGANPNQ). 4 disordered regions span residues 1242–1263 (QNGANPNQKDQKQKSALDEADD), 1449–1482 (RSEISSEKDSQELTSLENLEHPQSGSLSPVSGSM), 1512–1549 (FSGNDMNSKQNGSDCTLDGFPKSRHSDGTEKNKLPSQP), and 1606–1634 (CDQDLSNYDPKRGNRKTSSQQSPTGASES). The span at 1250–1263 (KDQKQKSALDEADD) shows a compositional bias: basic and acidic residues. Polar residues-rich tracts occupy residues 1460–1482 (ELTSLENLEHPQSGSLSPVSGSM) and 1515–1525 (NDMNSKQNGSD). Over residues 1535-1544 (RHSDGTEKNK) the composition is skewed to basic and acidic residues. Over residues 1621–1632 (KTSSQQSPTGAS) the composition is skewed to polar residues. One can recognise an RAMA domain in the interval 1683 to 1778 (KKALNYSTAP…TYLGKELLRY (96 aa)).

Interacts with REC114; the interaction is direct. Interacts with IHO1.

It is found in the nucleus. The protein localises to the chromosome. Its function is as follows. Required for DNA double-strand breaks (DSBs) formation during meiotic recombination. Regulates the spatial and temporal patterns of pre-DSB recombinosome assembly and recombination activity by acting as a scaffold that anchors REC114 and other factors to specific genomic locations, thereby regulating DSB formation. Plays a key role in recombination in the pseudoautosomal regions of sex chromosomes. This Homo sapiens (Human) protein is Ankyrin repeat domain-containing protein 31.